A 138-amino-acid chain; its full sequence is Large ribosomal subunit protein uL16 (138 aa).

Positions M1–G16 are enriched in basic residues. Positions M1–G24 are disordered.

This sequence belongs to the universal ribosomal protein uL16 family. Part of the 50S ribosomal subunit.

In terms of biological role, binds 23S rRNA and is also seen to make contacts with the A and possibly P site tRNAs. The sequence is that of Large ribosomal subunit protein uL16 from Frankia alni (strain DSM 45986 / CECT 9034 / ACN14a).